Reading from the N-terminus, the 279-residue chain is 2-dehydro-3-deoxyphosphooctonate aldolase (279 aa).

It belongs to the KdsA family.

Its subcellular location is the cytoplasm. It catalyses the reaction D-arabinose 5-phosphate + phosphoenolpyruvate + H2O = 3-deoxy-alpha-D-manno-2-octulosonate-8-phosphate + phosphate. Its pathway is carbohydrate biosynthesis; 3-deoxy-D-manno-octulosonate biosynthesis; 3-deoxy-D-manno-octulosonate from D-ribulose 5-phosphate: step 2/3. It functions in the pathway bacterial outer membrane biogenesis; lipopolysaccharide biosynthesis. The protein is 2-dehydro-3-deoxyphosphooctonate aldolase of Methylobacillus flagellatus (strain ATCC 51484 / DSM 6875 / VKM B-1610 / KT).